A 117-amino-acid chain; its full sequence is Glycine cleavage system H-like protein (117 aa).

The Lipoyl-binding domain occupies 21-103; sequence IVKLGLSSQM…ESEGWFVVLQ (83 aa). An N6-lipoyllysine modification is found at K62.

The protein belongs to the GcvH family. (R)-lipoate is required as a cofactor.

The polypeptide is Glycine cleavage system H-like protein (Chlamydia trachomatis serovar L2 (strain ATCC VR-902B / DSM 19102 / 434/Bu)).